A 585-amino-acid polypeptide reads, in one-letter code: T-cell surface protein tactile (585 aa).

Positions 1-21 (MEKKWKYCAVYYIIQIHFVKG) are cleaved as a signal peptide. The Extracellular segment spans residues 22 to 519 (VWEKTVNTEE…IVVNKPKDGM (498 aa)). The region spanning 38 to 125 (GSDVNLTCQT…YECMLVLYPE (88 aa)) is the Ig-like V-type 1 domain. N-linked (GlcNAc...) asparagine glycans are attached at residues Asn42, Asn97, Asn107, Asn148, Asn156, Asn166, Asn200, Asn215, Asn277, Asn278, Asn300, Asn350, and Asn368. An intrachain disulfide couples Cys45 to Cys118. The 83-residue stretch at 156–238 (NQTLEIPCFQ…YRLHLSPVQI (83 aa)) folds into the Ig-like V-type 2 domain. Residues Cys163 and Cys247 are joined by a disulfide bond. The region spanning 269–375 (PEIPVIVENN…VWNISSEKIT (107 aa)) is the Ig-like C2-type domain. An intrachain disulfide couples Cys290 to Cys355. 3 stretches are compositionally biased toward polar residues: residues 385–418 (TDPP…SSVT), 426–452 (RPNT…SSGT), and 460–475 (RIPS…GAGS). Residues 385–475 (TDPPLSVTES…YSSSPSGAGS (91 aa)) are disordered. Asn435 carries an N-linked (GlcNAc...) asparagine glycan. A glycan (N-linked (GlcNAc...) asparagine) is linked at Asn497. The helical transmembrane segment at 520 to 540 (SWPVIVAALLFCCMILFGLGV) threads the bilayer. Over 541-585 (RKWCQYQKEIMERPPPFKPPPPPIKYTCIQEPNESDLPYHEMETL) the chain is Cytoplasmic.

Homodimer; disulfide-linked. Interacts with PVR. As to expression, expressed on normal T-cell lines and clones, and some transformed T-cells, but no other cultured cell lines tested. It is expressed at very low levels on activated B-cells.

The protein localises to the membrane. Functionally, may be involved in adhesive interactions of activated T and NK cells during the late phase of the immune response. Promotes NK cell-target adhesion by interacting with PVR present on target cells. May function at a time after T and NK cells have penetrated the endothelium using integrins and selectins, when they are actively engaging diseased cells and moving within areas of inflammation. The chain is T-cell surface protein tactile (CD96) from Homo sapiens (Human).